The following is a 601-amino-acid chain: MTDSSPDASPSSLKIYFRLLGYVRPYIGLFLISIVGFLIFASTQPMLGYILKYFVDGLSNPQAVLFPGVPYLRDMQLLQAVPLLIVLIAAWQGLGSYLGNYFLAKVSLGLVHDLRVQLFNNLLTLPNRYFDKHNSGHLISRITFNVTMVTGAATDAIKVVIREGMTVIFLFGSLLWMNWRLTLVMIAILPLIAVMVRTASKKFRKQSKKIQVAMGDVTHVASETIQGYRVVRSFGGETYEQQRFLAASQGNTDKQLRMTRTGAIYTPLLQLVIYSAMAVLMFLVLYLRGDASAGEMVAYITMAGLLPKPIRQLSEVSSTIQKGVAGAESIFEQLDVEPEVDRGTVERASINGHLEVRNLSFTYPGTERQVLDDISFSIEPGKMVALVGRSGSGKSTLANLIPRFYHHDKGQILLDGTEVEDFRLLNLRRHIAQVTQHVTLFSDTVANNIAYGDLAGAPREDIEKAAADAYAMDFIAQLPEGLDTQVGENGVLLSGGQRQRLAIARALLKNAPLLILDEATSALDTESERHIQAALDKVMKGRTTLVIAHRLSTIEKADLILVMDQGRIVERGSHAQLLAQNGYYSRLHAMGLEEPAPSGIA.

The next 4 membrane-spanning stretches (helical) occupy residues 27-47, 83-103, 174-194, and 267-287; these read IGLF…QPML, LLIV…NYFL, LLWM…LIAV, and PLLQ…VLYL. The 292-residue stretch at 31 to 322 folds into the ABC transmembrane type-1 domain; sequence LISIVGFLIF…LSEVSSTIQK (292 aa). The region spanning 354–590 is the ABC transporter domain; the sequence is LEVRNLSFTY…NGYYSRLHAM (237 aa). Position 388 to 395 (388 to 395) interacts with ATP; it reads GRSGSGKS.

This sequence belongs to the ABC transporter superfamily. Lipid exporter (TC 3.A.1.106) family. In terms of assembly, homodimer.

It is found in the cell inner membrane. The enzyme catalyses ATP + H2O + lipid A-core oligosaccharideSide 1 = ADP + phosphate + lipid A-core oligosaccharideSide 2.. Functionally, involved in lipopolysaccharide (LPS) biosynthesis. Translocates lipid A-core from the inner to the outer leaflet of the inner membrane. Transmembrane domains (TMD) form a pore in the inner membrane and the ATP-binding domain (NBD) is responsible for energy generation. This Pseudomonas fluorescens (strain ATCC BAA-477 / NRRL B-23932 / Pf-5) protein is ATP-dependent lipid A-core flippase.